The primary structure comprises 327 residues: Chlorophenol reductase (327 aa).

The N-terminal stretch at 1–24 (MKKTLGIILSISLAFSVLALPIFA) is a signal peptide. Positions 65–110 (TYYTVVSGDFFWQIAAKHGLTIDALAKLNPQIKNVNLIFPGQKILV) constitute a LysM domain.

Requires cob(I)alamin as cofactor.

The protein localises to the secreted. It localises to the cell wall. The protein resides in the cell membrane. With respect to regulation, inhibited by sulfide and to a lesser extent by nitrite. Reductive dechlorination of ortho-chlorophenols. Dechlorinates in the ortho position with respect to the hydroxyl group. The polypeptide is Chlorophenol reductase (Desulfitobacterium hafniense (Desulfitobacterium frappieri)).